A 255-amino-acid polypeptide reads, in one-letter code: Pyridoxine 5'-phosphate synthase (255 aa).

N6 lines the 3-amino-2-oxopropyl phosphate pocket. 8 to 9 (DH) contributes to the 1-deoxy-D-xylulose 5-phosphate binding site. Residue R17 coordinates 3-amino-2-oxopropyl phosphate. H41 functions as the Proton acceptor in the catalytic mechanism. Residues R43 and H48 each contribute to the 1-deoxy-D-xylulose 5-phosphate site. E68 functions as the Proton acceptor in the catalytic mechanism. A 1-deoxy-D-xylulose 5-phosphate-binding site is contributed by T96. H208 (proton donor) is an active-site residue. 3-amino-2-oxopropyl phosphate-binding positions include G209 and 230–231 (GQ).

Belongs to the PNP synthase family. In terms of assembly, homooctamer; tetramer of dimers.

Its subcellular location is the cytoplasm. It catalyses the reaction 3-amino-2-oxopropyl phosphate + 1-deoxy-D-xylulose 5-phosphate = pyridoxine 5'-phosphate + phosphate + 2 H2O + H(+). The protein operates within cofactor biosynthesis; pyridoxine 5'-phosphate biosynthesis; pyridoxine 5'-phosphate from D-erythrose 4-phosphate: step 5/5. In terms of biological role, catalyzes the complicated ring closure reaction between the two acyclic compounds 1-deoxy-D-xylulose-5-phosphate (DXP) and 3-amino-2-oxopropyl phosphate (1-amino-acetone-3-phosphate or AAP) to form pyridoxine 5'-phosphate (PNP) and inorganic phosphate. The polypeptide is Pyridoxine 5'-phosphate synthase (Campylobacter lari (strain RM2100 / D67 / ATCC BAA-1060)).